Here is a 540-residue protein sequence, read N- to C-terminus: Protein GDAP2 homolog (540 aa).

Residues Arg56–Phe235 form the Macro domain. Residues Gln371 to Asn528 form the CRAL-TRIO domain.

Belongs to the GDAP2 family.

The protein is Protein GDAP2 homolog of Drosophila melanogaster (Fruit fly).